The primary structure comprises 124 residues: uncharacterized protein (124 aa).

A signal peptide spans 1–18 (MHIIKTLISVGVAFSLSA). C19 carries the N-palmitoyl cysteine lipid modification. A lipid anchor (S-diacylglycerol cysteine) is attached at C19.

Its subcellular location is the cell membrane. This is an uncharacterized protein from Pasteurella multocida (strain Pm70).